An 89-amino-acid chain; its full sequence is uncharacterized protein (89 aa).

Helical transmembrane passes span 5–27 (TLTE…GFTA), 32–51 (LYIG…KRLL), and 63–85 (LFFS…ALVA).

Its subcellular location is the cell membrane. This is an uncharacterized protein from Bacillus subtilis (strain 168).